The primary structure comprises 347 residues: Ribosomal RNA small subunit methyltransferase H (347 aa).

Residues 47–49 (GGY), aspartate 64, phenylalanine 91, aspartate 114, and glutamine 121 contribute to the S-adenosyl-L-methionine site. The interval 291–347 (PAVKGAVGPTAEEEERNPRARSAKLRAGIRTENPPLEDDLSLFGLPKLPETNELARS) is disordered.

The protein belongs to the methyltransferase superfamily. RsmH family.

The protein resides in the cytoplasm. It catalyses the reaction cytidine(1402) in 16S rRNA + S-adenosyl-L-methionine = N(4)-methylcytidine(1402) in 16S rRNA + S-adenosyl-L-homocysteine + H(+). Specifically methylates the N4 position of cytidine in position 1402 (C1402) of 16S rRNA. This is Ribosomal RNA small subunit methyltransferase H from Brucella anthropi (strain ATCC 49188 / DSM 6882 / CCUG 24695 / JCM 21032 / LMG 3331 / NBRC 15819 / NCTC 12168 / Alc 37) (Ochrobactrum anthropi).